A 59-amino-acid chain; its full sequence is Large ribosomal subunit protein bL32 (59 aa).

The segment at 1-59 (MAVQQNKKSPSKRGMHRSHDALTAPALSVDSTTGEVHRPHHISPNGMYRGRKVVKAKGE) is disordered. Positions 49–59 (RGRKVVKAKGE) are enriched in basic residues.

It belongs to the bacterial ribosomal protein bL32 family.

This chain is Large ribosomal subunit protein bL32 (rpmF), found in Neisseria meningitidis serogroup B (strain ATCC BAA-335 / MC58).